The chain runs to 387 residues: GTP-binding protein 10 (387 aa).

The Obg domain maps to 13-148; that stretch reads GNFIDKLRLF…RIIHLDLKLI (136 aa). The OBG-type G domain maps to 149 to 344; the sequence is ADVGLVGFPN…LKNCIRKSLD (196 aa). GTP contacts are provided by residues 155 to 162, 202 to 206, and 278 to 281; these read GFPNAGKS, DLPGL, and NKMD.

It belongs to the TRAFAC class OBG-HflX-like GTPase superfamily. OBG GTPase family.

The protein resides in the nucleus. It is found in the nucleolus. The protein localises to the chromosome. Functionally, may be involved in the ribosome maturation process. Complements an ObgE(CgtA) function in E.coli ribosome maturation. Plays a role of GTPase in vitro. When missing, disorganization of the nucleolar architecture is observed. This is GTP-binding protein 10 (GTPBP10) from Homo sapiens (Human).